A 198-amino-acid polypeptide reads, in one-letter code: GTP-binding protein Di-Ras1 (198 aa).

Residues 17–22 (GVGKSS), 33–39 (RDTYIPT), 61–65 (DTTGS), 121–125 (NKCDE), A151, and 151–152 (AK) contribute to the GTP site. Residues 36 to 44 (YIPTIEDTY) carry the Effector region motif. The segment covering 178 to 192 (DGKRSGKQKRTDRVK) has biased composition (basic and acidic residues). The segment at 178–198 (DGKRSGKQKRTDRVKGKCTLM) is disordered. Cysteine methyl ester is present on C195. The S-geranylgeranyl cysteine moiety is linked to residue C195. Positions 196-198 (TLM) are cleaved as a propeptide — removed in mature form.

Belongs to the small GTPase superfamily. Di-Ras family. As to expression, highly expressed in heart and brain.

It localises to the cell membrane. In terms of biological role, displays low GTPase activity and exists predominantly in the GTP-bound form. This Homo sapiens (Human) protein is GTP-binding protein Di-Ras1 (DIRAS1).